Reading from the N-terminus, the 38-residue chain is Photosystem II reaction center protein L (38 aa).

The helical transmembrane segment at 17–37 (SLYWGLLLIFVLAVLFSSYIF) threads the bilayer.

It belongs to the PsbL family. In terms of assembly, PSII is composed of 1 copy each of membrane proteins PsbA, PsbB, PsbC, PsbD, PsbE, PsbF, PsbH, PsbI, PsbJ, PsbK, PsbL, PsbM, PsbT, PsbX, PsbY, PsbZ, Psb30/Ycf12, at least 3 peripheral proteins of the oxygen-evolving complex and a large number of cofactors. It forms dimeric complexes.

It is found in the plastid. It localises to the chloroplast thylakoid membrane. Its function is as follows. One of the components of the core complex of photosystem II (PSII). PSII is a light-driven water:plastoquinone oxidoreductase that uses light energy to abstract electrons from H(2)O, generating O(2) and a proton gradient subsequently used for ATP formation. It consists of a core antenna complex that captures photons, and an electron transfer chain that converts photonic excitation into a charge separation. This subunit is found at the monomer-monomer interface and is required for correct PSII assembly and/or dimerization. The polypeptide is Photosystem II reaction center protein L (Oltmannsiellopsis viridis (Marine flagellate)).